A 96-amino-acid chain; its full sequence is Small ribosomal subunit protein bS6 (96 aa).

Belongs to the bacterial ribosomal protein bS6 family.

Functionally, binds together with bS18 to 16S ribosomal RNA. This Streptomyces griseus subsp. griseus (strain JCM 4626 / CBS 651.72 / NBRC 13350 / KCC S-0626 / ISP 5235) protein is Small ribosomal subunit protein bS6.